Here is a 542-residue protein sequence, read N- to C-terminus: MSTELQSELIQAVELRRNFAIISHPDAGKTTLTEKLLLYGGAIHEAGAVKARRAQRKATSDWMAMEQQRGISITSTVLQFEYQKCQINLLDTPGHQDFSEDTYRTLAAADNAVMLIDAAKGLEPQTRKLFEVCKLRGIPIFTFINKLDRPGREPLELLDEIEQELGLQTYAVNWPIGMGDRFKGVFDRHKQQIHLFERSAHGSREARDTIVELGDPRIEEKLEQSLYYQLKNDLELLEGVGPELDLQLVHEGKMTPVFFGSAMTNFGVELFLKYFLEYALKPGSHYSSVGEVAPTYPEFSGFVFKLQANMDPKHRDRVAFIRVCTGKFEKDMMVNHARIGKLIRLSRPQKLFAQERESIDVAYPGDVIGLNNPGVFAIGDTIYTGQKLEYEGIPYFSPELFASLRNPNPSKSKQFQKGVAELREEGAVQIMYSTDEAKRDPILAAVGQLQFEVVQFRLQNEYGVETILDLLPYSVARWVEGGWEALEKVGRIFNTTTVKDSMGRPVLLFRNEWNCQQLLGDHPELKLSAIAPVFSSQQPVEE.

A tr-type G domain is found at 14-283 (ELRRNFAIIS…YFLEYALKPG (270 aa)). Residues 23 to 30 (SHPDAGKT), 91 to 95 (DTPGH), and 145 to 148 (NKLD) contribute to the GTP site.

The protein belongs to the TRAFAC class translation factor GTPase superfamily. Classic translation factor GTPase family. PrfC subfamily.

Its subcellular location is the cytoplasm. In terms of biological role, increases the formation of ribosomal termination complexes and stimulates activities of RF-1 and RF-2. It binds guanine nucleotides and has strong preference for UGA stop codons. It may interact directly with the ribosome. The stimulation of RF-1 and RF-2 is significantly reduced by GTP and GDP, but not by GMP. This Nostoc punctiforme (strain ATCC 29133 / PCC 73102) protein is Peptide chain release factor 3.